The chain runs to 298 residues: Nitrogenase iron protein (298 aa).

13–20 (GKGGIGKS) lines the ATP pocket. C101 contributes to the [4Fe-4S] cluster binding site. At R104 the chain carries ADP-ribosylarginine; by dinitrogenase reductase ADP-ribosyltransferase. Position 135 (C135) interacts with [4Fe-4S] cluster.

Belongs to the NifH/BchL/ChlL family. Homodimer. The cofactor is [4Fe-4S] cluster. In terms of processing, the reversible ADP-ribosylation of Arg-104 inactivates the nitrogenase reductase and regulates nitrogenase activity.

The enzyme catalyses N2 + 8 reduced [2Fe-2S]-[ferredoxin] + 16 ATP + 16 H2O = H2 + 8 oxidized [2Fe-2S]-[ferredoxin] + 2 NH4(+) + 16 ADP + 16 phosphate + 6 H(+). Its function is as follows. The key enzymatic reactions in nitrogen fixation are catalyzed by the nitrogenase complex, which has 2 components: the iron protein and the molybdenum-iron protein. This is Nitrogenase iron protein from Cyanothece sp. (strain PCC 7425 / ATCC 29141).